A 957-amino-acid polypeptide reads, in one-letter code: Glycine dehydrogenase (decarboxylating) (957 aa).

Lys-708 is subject to N6-(pyridoxal phosphate)lysine.

Belongs to the GcvP family. As to quaternary structure, the glycine cleavage system is composed of four proteins: P, T, L and H. It depends on pyridoxal 5'-phosphate as a cofactor.

The catalysed reaction is N(6)-[(R)-lipoyl]-L-lysyl-[glycine-cleavage complex H protein] + glycine + H(+) = N(6)-[(R)-S(8)-aminomethyldihydrolipoyl]-L-lysyl-[glycine-cleavage complex H protein] + CO2. In terms of biological role, the glycine cleavage system catalyzes the degradation of glycine. The P protein binds the alpha-amino group of glycine through its pyridoxal phosphate cofactor; CO(2) is released and the remaining methylamine moiety is then transferred to the lipoamide cofactor of the H protein. This chain is Glycine dehydrogenase (decarboxylating), found in Escherichia coli O6:H1 (strain CFT073 / ATCC 700928 / UPEC).